The sequence spans 542 residues: Katanin p60 ATPase-containing subunit A-like 2 (542 aa).

The LisH domain occupies 25–57 (RRKNLLILIMHYLLQEGYMDSANSLEQETKISL). Disordered regions lie at residues 94–126 (LDHD…RIAQ) and 142–168 (HAHQ…ASEI). Positions 114–126 (GSNSTQGLPRIAQ) are enriched in polar residues. Position 298 to 305 (298 to 305 (GPPGTGKT)) interacts with ATP.

Belongs to the AAA ATPase family. Katanin p60 subunit A1 subfamily. A-like 2 sub-subfamily.

Its subcellular location is the cytoplasm. It is found in the cytoskeleton. The protein localises to the spindle. It localises to the spindle pole. It catalyses the reaction n ATP + n H2O + a microtubule = n ADP + n phosphate + (n+1) alpha/beta tubulin heterodimers.. Severs microtubules in vitro in an ATP-dependent manner. This activity may promote rapid reorganization of cellular microtubule arrays. The polypeptide is Katanin p60 ATPase-containing subunit A-like 2 (katnal2) (Xenopus tropicalis (Western clawed frog)).